Reading from the N-terminus, the 314-residue chain is R2-like ligand binding oxidase (314 aa).

3 residues coordinate Mn(2+): E68, E101, and H104. Residues 71 to 162 (VTEDIQPFMS…AAQVRASVTY (92 aa)) constitute a cross-link (3-(O4'-tyrosyl)-valine (Val-Tyr)). Position 101 (E101) interacts with Fe cation. Positions 167, 202, and 205 each coordinate Fe cation.

The protein belongs to the ribonucleoside diphosphate reductase small chain family. R2-like ligand binding oxidase subfamily. Homodimer. The cofactor is Fe cation. Requires Mn(2+) as cofactor.

Probable oxidase that might be involved in lipid metabolism. This chain is R2-like ligand binding oxidase, found in Mycobacterium bovis (strain ATCC BAA-935 / AF2122/97).